The chain runs to 346 residues: Phosphate acyltransferase (346 aa).

Belongs to the PlsX family. Homodimer. Probably interacts with PlsY.

The protein resides in the cytoplasm. The catalysed reaction is a fatty acyl-[ACP] + phosphate = an acyl phosphate + holo-[ACP]. It participates in lipid metabolism; phospholipid metabolism. Its function is as follows. Catalyzes the reversible formation of acyl-phosphate (acyl-PO(4)) from acyl-[acyl-carrier-protein] (acyl-ACP). This enzyme utilizes acyl-ACP as fatty acyl donor, but not acyl-CoA. The chain is Phosphate acyltransferase from Delftia acidovorans (strain DSM 14801 / SPH-1).